Here is a 116-residue protein sequence, read N- to C-terminus: Ribonuclease P protein component (116 aa).

The protein belongs to the RnpA family. In terms of assembly, consists of a catalytic RNA component (M1 or rnpB) and a protein subunit.

The enzyme catalyses Endonucleolytic cleavage of RNA, removing 5'-extranucleotides from tRNA precursor.. RNaseP catalyzes the removal of the 5'-leader sequence from pre-tRNA to produce the mature 5'-terminus. It can also cleave other RNA substrates such as 4.5S RNA. The protein component plays an auxiliary but essential role in vivo by binding to the 5'-leader sequence and broadening the substrate specificity of the ribozyme. This chain is Ribonuclease P protein component, found in Mycobacterium bovis (strain ATCC BAA-935 / AF2122/97).